The primary structure comprises 26 residues: Peroxidase 1 (26 aa).

D15 contacts Ca(2+).

It belongs to the peroxidase family. Classical plant (class III) peroxidase subfamily. It depends on heme b as a cofactor. Ca(2+) serves as cofactor.

Its subcellular location is the secreted. The enzyme catalyses 2 a phenolic donor + H2O2 = 2 a phenolic radical donor + 2 H2O. Functionally, removal of H(2)O(2), oxidation of toxic reductants, biosynthesis and degradation of lignin, suberization, auxin catabolism, response to environmental stresses such as wounding, pathogen attack and oxidative stress. These functions might be dependent on each isozyme/isoform in each plant tissue. The polypeptide is Peroxidase 1 (Vitis vinifera (Grape)).